The following is a 312-amino-acid chain: Porphobilinogen deaminase (312 aa).

Cys-241 carries the post-translational modification S-(dipyrrolylmethanemethyl)cysteine.

The protein belongs to the HMBS family. In terms of assembly, monomer. Dipyrromethane is required as a cofactor.

It catalyses the reaction 4 porphobilinogen + H2O = hydroxymethylbilane + 4 NH4(+). It participates in porphyrin-containing compound metabolism; protoporphyrin-IX biosynthesis; coproporphyrinogen-III from 5-aminolevulinate: step 2/4. Its function is as follows. Tetrapolymerization of the monopyrrole PBG into the hydroxymethylbilane pre-uroporphyrinogen in several discrete steps. This is Porphobilinogen deaminase from Cytophaga hutchinsonii (strain ATCC 33406 / DSM 1761 / CIP 103989 / NBRC 15051 / NCIMB 9469 / D465).